We begin with the raw amino-acid sequence, 418 residues long: Light-independent protochlorophyllide reductase subunit N (418 aa).

Cysteine 17, cysteine 42, and cysteine 103 together coordinate [4Fe-4S] cluster.

This sequence belongs to the BchN/ChlN family. As to quaternary structure, protochlorophyllide reductase is composed of three subunits; ChlL, ChlN and ChlB. Forms a heterotetramer of two ChlB and two ChlN subunits. [4Fe-4S] cluster is required as a cofactor.

The enzyme catalyses chlorophyllide a + oxidized 2[4Fe-4S]-[ferredoxin] + 2 ADP + 2 phosphate = protochlorophyllide a + reduced 2[4Fe-4S]-[ferredoxin] + 2 ATP + 2 H2O. It participates in porphyrin-containing compound metabolism; chlorophyll biosynthesis (light-independent). Its function is as follows. Component of the dark-operative protochlorophyllide reductase (DPOR) that uses Mg-ATP and reduced ferredoxin to reduce ring D of protochlorophyllide (Pchlide) to form chlorophyllide a (Chlide). This reaction is light-independent. The NB-protein (ChlN-ChlB) is the catalytic component of the complex. The protein is Light-independent protochlorophyllide reductase subunit N of Prochlorococcus marinus (strain MIT 9215).